Here is a 182-residue protein sequence, read N- to C-terminus: Probable phosphoheptose isomerase (182 aa).

The region spanning 29 to 182 is the SIS domain; sequence ISSAISSGNK…MICAMIDEKF (154 aa). 44–46 is a binding site for substrate; it reads NGG. Zn(2+) is bound by residues His53 and Glu57. Substrate-binding positions include Glu57, 86 to 87, 112 to 114, Ser117, and Gln164; these read ND and STS. Positions 164 and 172 each coordinate Zn(2+).

Belongs to the SIS family. GmhA subfamily. Zn(2+) is required as a cofactor.

It localises to the cytoplasm. The catalysed reaction is 2 D-sedoheptulose 7-phosphate = D-glycero-alpha-D-manno-heptose 7-phosphate + D-glycero-beta-D-manno-heptose 7-phosphate. It functions in the pathway carbohydrate biosynthesis; D-glycero-D-manno-heptose 7-phosphate biosynthesis; D-glycero-alpha-D-manno-heptose 7-phosphate and D-glycero-beta-D-manno-heptose 7-phosphate from sedoheptulose 7-phosphate: step 1/1. Functionally, catalyzes the isomerization of sedoheptulose 7-phosphate in D-glycero-D-manno-heptose 7-phosphate. The protein is Probable phosphoheptose isomerase of Thermoplasma acidophilum (strain ATCC 25905 / DSM 1728 / JCM 9062 / NBRC 15155 / AMRC-C165).